We begin with the raw amino-acid sequence, 359 residues long: Centromere-binding protein 1 (359 aa).

The segment at 1 to 262 (MSGKRSYQDD…SHKEVERRRR (262 aa)) is disordered. A compositionally biased stretch (basic and acidic residues) spans 55 to 78 (KENKENRDGDKVGDDEHDVVKGES). A compositionally biased stretch (acidic residues) spans 120-161 (GDEDEDEDEEEEEDEDDHVDIDDVDKDPDAVIDEDDDEEDED). Over residues 249-259 (QRKESHKEVER) the composition is skewed to basic and acidic residues. The region spanning 249–297 (QRKESHKEVERRRRQNINTAIEKLSDLLPVKETSKAAILSRAAEYIQKM) is the bHLH domain.

In terms of assembly, binds DNA as a dimer.

The protein localises to the nucleus. It localises to the chromosome. Its subcellular location is the centromere. In terms of biological role, required for chromosome stability and methionine prototrophy. It is involved in chromosomal segregation. Binds to a highly conserved DNA sequence (5'-RTCACRTG-3'), called CDEI, found in centromeres and in several promoters. The polypeptide is Centromere-binding protein 1 (CBF1) (Kluyveromyces lactis (strain ATCC 8585 / CBS 2359 / DSM 70799 / NBRC 1267 / NRRL Y-1140 / WM37) (Yeast)).